Consider the following 460-residue polypeptide: Probable Xaa-Pro aminopeptidase VDBG_02538 (460 aa).

Residues aspartate 256, aspartate 267, glutamate 390, and glutamate 430 each coordinate Mn(2+).

It belongs to the peptidase M24B family. Requires Mn(2+) as cofactor.

It carries out the reaction Release of any N-terminal amino acid, including proline, that is linked to proline, even from a dipeptide or tripeptide.. In terms of biological role, catalyzes the removal of a penultimate prolyl residue from the N-termini of peptides. The polypeptide is Probable Xaa-Pro aminopeptidase VDBG_02538 (Verticillium alfalfae (strain VaMs.102 / ATCC MYA-4576 / FGSC 10136) (Verticillium wilt of alfalfa)).